A 493-amino-acid polypeptide reads, in one-letter code: MAENLVNAFVTLVIENSDYEELDRIYLTNKVFALVGEGVADVETESSELIDLKDQLLQAGVKAGSVGELNEEQDIIGAQLMDLITPSPSAVNRNFWDTYKSNPEQAIADFYVQSKRNDYVKVKAIAQNIAYKAPTKYGDLEITINLSKPEKDPKAIAAAKNAVASDYPKCQLCMENEGYLGRINHPARSNHRVIRFQMEGNDWGFQYSPYAYFNEHSIFFYGKHEPMHISPLTFGRLLSIVEAFPGYFAGSNADLPIVGGSILTHEHYQGGRHTFPMEVAGIKEKVSFDGYSDVETGIVNWPMSVLRLRSEDKERLIALATKILNCWRGYSDEKAGVLAQSDGHPHHTITPIARRKDGKFELDLVLRDNQTSEEHPDGIYHPHKDVQHIKKENIGLIEVMGLAILPPRLKTELKDVEDYLLGQGNQVAPIHQEWADELKAQNPNVTAEEVTEVVRQSVADIFARVLEDAGVYKTNSEGLDQFKAFVDFVNLAD.

This sequence belongs to the galactose-1-phosphate uridylyltransferase type 2 family.

Its subcellular location is the cytoplasm. It catalyses the reaction alpha-D-galactose 1-phosphate + UDP-alpha-D-glucose = alpha-D-glucose 1-phosphate + UDP-alpha-D-galactose. Its pathway is carbohydrate metabolism; galactose metabolism. The polypeptide is Galactose-1-phosphate uridylyltransferase (Streptococcus salivarius).